The following is a 351-amino-acid chain: MIVTEALTKAFSGPFGAIEVLRGIDLEIAKSEVFGVIGRSGAGKSTLVRCLNLLERPTGGRVWVGGRELTSFDERSLRQARRDIGMIFQHFNVLSSRTAADNIALPLELVGLPGPVIRRRVAELLDLVGLTDKGEAYPAELSGGQKQRVGIARALASKPSVLLCDEATSALDPETTKSILALLKDINRRLGLTIVLITHEMHVIKDIADRVAVLDHGRVVEQGRVFDVFTDPQHAVTRAFVHEVLNRDLPEVLVPRLATTRLEGGPVIWRITFTGPSANDPVVSEMVRRFGLSFNILYGHIDYIQGLPYGTLVVEAAGTESARHAALAYLSQKNLSVEVLGHVATPDPVTA.

Residues 2–241 (IVTEALTKAF…PQHAVTRAFV (240 aa)) form the ABC transporter domain. 38 to 45 (GRSGAGKS) provides a ligand contact to ATP.

This sequence belongs to the ABC transporter superfamily. Methionine importer (TC 3.A.1.24) family. In terms of assembly, the complex is composed of two ATP-binding proteins (MetN), two transmembrane proteins (MetI) and a solute-binding protein (MetQ).

It is found in the cell inner membrane. The enzyme catalyses L-methionine(out) + ATP + H2O = L-methionine(in) + ADP + phosphate + H(+). The catalysed reaction is D-methionine(out) + ATP + H2O = D-methionine(in) + ADP + phosphate + H(+). Its function is as follows. Part of the ABC transporter complex MetNIQ involved in methionine import. Responsible for energy coupling to the transport system. The polypeptide is Methionine import ATP-binding protein MetN (Rhodospirillum rubrum (strain ATCC 11170 / ATH 1.1.1 / DSM 467 / LMG 4362 / NCIMB 8255 / S1)).